The sequence spans 631 residues: Polyadenylate-binding protein 3 (631 aa).

RRM domains follow at residues 11–89, 99–175, 191–268, and 294–370; these read ASLY…WSQR, GNIF…QFKS, PNVY…RAQK, and VNLY…LAQR. Tyr-140 bears the Phosphotyrosine mark. Ser-315 is subject to Phosphoserine. At Lys-361 the chain carries N6,N6-dimethyllysine; alternate. A Glycyl lysine isopeptide (Lys-Gly) (interchain with G-Cter in SUMO2); alternate cross-link involves residue Lys-361. Tyr-364 carries the post-translational modification Phosphotyrosine. Omega-N-methylarginine occurs at positions 426, 430, and 449. Position 501 is a dimethylated arginine (Arg-501). An Omega-N-methylarginine modification is found at Arg-513. Residues 537 to 614 form the PABC domain; that stretch reads QETLTASRLA…AVAVLQAHQA (78 aa).

Belongs to the polyadenylate-binding protein type-1 family. As to expression, testis specific.

It localises to the cytoplasm. Its function is as follows. Binds the poly(A) tail of mRNA. May be involved in cytoplasmic regulatory processes of mRNA metabolism. Binds poly(A) with a slightly lower affinity as compared to PABPC1. This Homo sapiens (Human) protein is Polyadenylate-binding protein 3 (PABPC3).